The primary structure comprises 156 residues: ATP synthase subunit b (156 aa).

A helical membrane pass occupies residues 7–29; sequence LIGQLIAFALFTWFCVKFVWPPI.

The protein belongs to the ATPase B chain family. As to quaternary structure, F-type ATPases have 2 components, F(1) - the catalytic core - and F(0) - the membrane proton channel. F(1) has five subunits: alpha(3), beta(3), gamma(1), delta(1), epsilon(1). F(0) has three main subunits: a(1), b(2) and c(10-14). The alpha and beta chains form an alternating ring which encloses part of the gamma chain. F(1) is attached to F(0) by a central stalk formed by the gamma and epsilon chains, while a peripheral stalk is formed by the delta and b chains.

The protein resides in the cell inner membrane. Its function is as follows. F(1)F(0) ATP synthase produces ATP from ADP in the presence of a proton or sodium gradient. F-type ATPases consist of two structural domains, F(1) containing the extramembraneous catalytic core and F(0) containing the membrane proton channel, linked together by a central stalk and a peripheral stalk. During catalysis, ATP synthesis in the catalytic domain of F(1) is coupled via a rotary mechanism of the central stalk subunits to proton translocation. Functionally, component of the F(0) channel, it forms part of the peripheral stalk, linking F(1) to F(0). The chain is ATP synthase subunit b from Actinobacillus succinogenes (strain ATCC 55618 / DSM 22257 / CCUG 43843 / 130Z).